A 159-amino-acid chain; its full sequence is Ribosomal RNA large subunit methyltransferase H (159 aa).

Residues Leu-76, Gly-108, and 127 to 132 (FSKMTF) contribute to the S-adenosyl-L-methionine site.

The protein belongs to the RNA methyltransferase RlmH family. In terms of assembly, homodimer.

The protein localises to the cytoplasm. The catalysed reaction is pseudouridine(1915) in 23S rRNA + S-adenosyl-L-methionine = N(3)-methylpseudouridine(1915) in 23S rRNA + S-adenosyl-L-homocysteine + H(+). Functionally, specifically methylates the pseudouridine at position 1915 (m3Psi1915) in 23S rRNA. The protein is Ribosomal RNA large subunit methyltransferase H of Staphylococcus saprophyticus subsp. saprophyticus (strain ATCC 15305 / DSM 20229 / NCIMB 8711 / NCTC 7292 / S-41).